Reading from the N-terminus, the 238-residue chain is tRNA1(Val) (adenine(37)-N6)-methyltransferase (238 aa).

The protein belongs to the methyltransferase superfamily. tRNA (adenine-N(6)-)-methyltransferase family.

The protein localises to the cytoplasm. It carries out the reaction adenosine(37) in tRNA1(Val) + S-adenosyl-L-methionine = N(6)-methyladenosine(37) in tRNA1(Val) + S-adenosyl-L-homocysteine + H(+). Its function is as follows. Specifically methylates the adenine in position 37 of tRNA(1)(Val) (anticodon cmo5UAC). The sequence is that of tRNA1(Val) (adenine(37)-N6)-methyltransferase from Cytophaga hutchinsonii (strain ATCC 33406 / DSM 1761 / CIP 103989 / NBRC 15051 / NCIMB 9469 / D465).